We begin with the raw amino-acid sequence, 200 residues long: Recombination protein RecR (200 aa).

Residues 57 to 72 (CSHCRTFTENERCEIC) form a C4-type zinc finger. Residues 81–176 (GLLCVVESPA…KVSRIAHGVP (96 aa)) form the Toprim domain.

It belongs to the RecR family.

May play a role in DNA repair. It seems to be involved in an RecBC-independent recombinational process of DNA repair. It may act with RecF and RecO. In Aeromonas hydrophila subsp. hydrophila (strain ATCC 7966 / DSM 30187 / BCRC 13018 / CCUG 14551 / JCM 1027 / KCTC 2358 / NCIMB 9240 / NCTC 8049), this protein is Recombination protein RecR.